The chain runs to 122 residues: Small ribosomal subunit protein uS13 (122 aa).

The tract at residues 95–122 (GLPVRGQRTHTNARTRKGPAKSIAGKKK) is disordered.

This sequence belongs to the universal ribosomal protein uS13 family. Part of the 30S ribosomal subunit. Forms a loose heterodimer with protein S19. Forms two bridges to the 50S subunit in the 70S ribosome.

Located at the top of the head of the 30S subunit, it contacts several helices of the 16S rRNA. In the 70S ribosome it contacts the 23S rRNA (bridge B1a) and protein L5 of the 50S subunit (bridge B1b), connecting the 2 subunits; these bridges are implicated in subunit movement. Contacts the tRNAs in the A and P-sites. In Nitrobacter winogradskyi (strain ATCC 25391 / DSM 10237 / CIP 104748 / NCIMB 11846 / Nb-255), this protein is Small ribosomal subunit protein uS13.